The sequence spans 365 residues: MSGNSIGQNFVVTTFGESHGVALGCIIDGCPPGLELTEADMQHDLDRRRPGTSRYTTARREPDEVRILSGVFEGKTTGTSIGLIIENTDQRSQDYSNIKDLFRPGHADYTYQQKYGLRDYRGGGRSSARETAMRVAAGAVAKKYLKAVHGIEIYGFLSQLGPIEAEHIDREQIEQNAFFFPDASKLEALDEYMRELKKSGDSIGAKVSVIATNVPVGLGEPVFDRLDADIAHALMGINAVKGVEIGDGFAVVTQKGSEHRDLMSPEGFASNHAGGVLGGISSGQPIVAHMALKPTSSISIPGESMTVQGNTAEVVTKGRHDPCVGIRAVPIAEAMLAIVLMDHLLRHRAQNQHVHSETPVLGMRS.

Positions 41–60 (MQHDLDRRRPGTSRYTTARR) are disordered. NADP(+)-binding residues include arginine 48 and arginine 54. FMN contacts are provided by residues 125–127 (RSS), 238–239 (NA), glycine 278, 293–297 (KPTSS), and arginine 319.

The protein belongs to the chorismate synthase family. As to quaternary structure, homotetramer. FMNH2 is required as a cofactor.

It carries out the reaction 5-O-(1-carboxyvinyl)-3-phosphoshikimate = chorismate + phosphate. It participates in metabolic intermediate biosynthesis; chorismate biosynthesis; chorismate from D-erythrose 4-phosphate and phosphoenolpyruvate: step 7/7. Functionally, catalyzes the anti-1,4-elimination of the C-3 phosphate and the C-6 proR hydrogen from 5-enolpyruvylshikimate-3-phosphate (EPSP) to yield chorismate, which is the branch point compound that serves as the starting substrate for the three terminal pathways of aromatic amino acid biosynthesis. This reaction introduces a second double bond into the aromatic ring system. This Shewanella amazonensis (strain ATCC BAA-1098 / SB2B) protein is Chorismate synthase.